Reading from the N-terminus, the 410-residue chain is Chlorobenzene dioxygenase, ferredoxin reductase component (410 aa).

4–35 (HVAIIGNGVAGFTTAQALRAEGFEGRISLIGN) contacts FAD. An NAD(+)-binding site is contributed by 145–173 (RLVIAGGGLIGCEVATTARKLGLAVTILE).

Belongs to the bacterial ring-hydroxylating dioxygenase ferredoxin reductase family. In terms of assembly, this dioxygenase system consists of four proteins: the two subunits of the oxygenase component (TecA1 and TecA2), a ferredoxin (TecA3) and a ferredoxin reductase (TecA4). Requires FAD as cofactor.

It catalyses the reaction 2 reduced [2Fe-2S]-[ferredoxin] + NAD(+) + H(+) = 2 oxidized [2Fe-2S]-[ferredoxin] + NADH. The protein operates within aromatic compound metabolism. In terms of biological role, part of the chlorobenzene dioxygenase system that catalyzes the dihydroxylation of a range of aromatic compounds, including chlorinated benzenes and toluenes, and dinuclear aromatics such as biphenyl and dibenzo-p-dioxin. The protein is Chlorobenzene dioxygenase, ferredoxin reductase component of Cupriavidus sp. (strain PS12).